Here is a 284-residue protein sequence, read N- to C-terminus: L-ribulose-5-phosphate 3-epimerase UlaE (284 aa).

Belongs to the L-ribulose-5-phosphate 3-epimerase family.

The enzyme catalyses L-ribulose 5-phosphate = L-xylulose 5-phosphate. The protein operates within cofactor degradation; L-ascorbate degradation; D-xylulose 5-phosphate from L-ascorbate: step 3/4. Functionally, catalyzes the isomerization of L-xylulose-5-phosphate to L-ribulose-5-phosphate. Is involved in the anaerobic L-ascorbate utilization. The chain is L-ribulose-5-phosphate 3-epimerase UlaE from Salmonella paratyphi A (strain AKU_12601).